A 68-amino-acid polypeptide reads, in one-letter code: Glucagon-1 (68 aa).

This sequence belongs to the glucagon family.

It is found in the secreted. In terms of biological role, promotes hydrolysis of glycogen and lipids, and raises the blood sugar level. The sequence is that of Glucagon-1 (gcg) from Oncorhynchus kisutch (Coho salmon).